The chain runs to 573 residues: Methionine--tRNA ligase (573 aa).

The 'HIGH' region signature appears at 11 to 21 (PYINGIKHLGN). 4 residues coordinate Zn(2+): C143, C146, C156, and C159. A 'KMSKS' region motif is present at residues 346–350 (QFSTS). T349 lines the ATP pocket.

Belongs to the class-I aminoacyl-tRNA synthetase family. MetG type 1 subfamily. As to quaternary structure, monomer. Zn(2+) is required as a cofactor.

Its subcellular location is the cytoplasm. It catalyses the reaction tRNA(Met) + L-methionine + ATP = L-methionyl-tRNA(Met) + AMP + diphosphate. Functionally, is required not only for elongation of protein synthesis but also for the initiation of all mRNA translation through initiator tRNA(fMet) aminoacylation. The sequence is that of Methionine--tRNA ligase from Ruegeria sp. (strain TM1040) (Silicibacter sp.).